We begin with the raw amino-acid sequence, 225 residues long: UPF0173 metal-dependent hydrolase Tneu_1348 (225 aa).

It belongs to the UPF0173 family.

The protein is UPF0173 metal-dependent hydrolase Tneu_1348 of Pyrobaculum neutrophilum (strain DSM 2338 / JCM 9278 / NBRC 100436 / V24Sta) (Thermoproteus neutrophilus).